The following is a 243-amino-acid chain: MLIIPAIDLKDGKCVRLKQGRMEDDTVFSDDPVATAQHWVNEGARRLHLVDLNGAFAGTPIHKPVVEAIAKAQPELPIQIGGGIRSLETIEHYLDAGVSFVIIGTKAVQDPEFVEQACKQFAGHIIVGIDAKDGMVATDGWANVTDVKATDLAKRFADAGVSSIVYTDIARDGMMQGVNVEQTVNLAQYSGLPVIASGGVTNLDDVRLLKGKPGILGAITGRAIYEGTLSLREAQLLLDQNTL.

Residue D8 is the Proton acceptor of the active site. D130 acts as the Proton donor in catalysis.

It belongs to the HisA/HisF family.

It is found in the cytoplasm. The catalysed reaction is 1-(5-phospho-beta-D-ribosyl)-5-[(5-phospho-beta-D-ribosylamino)methylideneamino]imidazole-4-carboxamide = 5-[(5-phospho-1-deoxy-D-ribulos-1-ylimino)methylamino]-1-(5-phospho-beta-D-ribosyl)imidazole-4-carboxamide. Its pathway is amino-acid biosynthesis; L-histidine biosynthesis; L-histidine from 5-phospho-alpha-D-ribose 1-diphosphate: step 4/9. This chain is 1-(5-phosphoribosyl)-5-[(5-phosphoribosylamino)methylideneamino] imidazole-4-carboxamide isomerase, found in Acinetobacter baylyi (strain ATCC 33305 / BD413 / ADP1).